Here is a 128-residue protein sequence, read N- to C-terminus: Sulfurtransferase TusD (128 aa).

Catalysis depends on cysteine 78, which acts as the Cysteine persulfide intermediate.

The protein belongs to the DsrE/TusD family. In terms of assembly, heterohexamer, formed by a dimer of trimers. The hexameric TusBCD complex contains 2 copies each of TusB, TusC and TusD. The TusBCD complex interacts with TusE.

It localises to the cytoplasm. Its function is as follows. Part of a sulfur-relay system required for 2-thiolation of 5-methylaminomethyl-2-thiouridine (mnm(5)s(2)U) at tRNA wobble positions. Accepts sulfur from TusA and transfers it in turn to TusE. This is Sulfurtransferase TusD from Escherichia coli (strain K12 / MC4100 / BW2952).